The chain runs to 279 residues: Zinc-finger homeodomain protein 1 (279 aa).

A compositionally biased stretch (acidic residues) spans 1–13 (MDFDDHDDGDEEM). The disordered stretch occupies residues 1–47 (MDFDDHDDGDEEMPPMPVSSSYETPPQHGLAGGGMAPKPPGEIGSRV). The segment at 57–106 (YRECLKNHAVGIGGHAVDGCGEFMAAGEEGTIDALRCAACNCHRNFHRKE) adopts a ZF-HD dimerization-type; degenerate zinc-finger fold. The tract at residues 168 to 190 (RPLALPSTSHSGRDDGDDLSGMV) is disordered. Positions 215–278 (KKRFRTKFTQ…NNKHTLGKKL (64 aa)) form a DNA-binding region, homeobox.

As to quaternary structure, homo- and heterodimer with other ZFHD proteins.

It localises to the nucleus. Functionally, putative transcription factor. The chain is Zinc-finger homeodomain protein 1 (ZHD1) from Oryza sativa subsp. japonica (Rice).